The following is a 389-amino-acid chain: S-adenosylmethionine synthase (389 aa).

ATP is bound at residue His17. Residue Asp19 participates in Mg(2+) binding. K(+) is bound at residue Glu45. 2 residues coordinate L-methionine: Glu58 and Gln101. Residues 101–111 (QSPDIAQGVNP) form a flexible loop region. ATP-binding positions include 168 to 170 (DGK), 234 to 235 (RF), Asp243, 249 to 250 (RK), and Lys270. Position 243 (Asp243) interacts with L-methionine. Lys274 provides a ligand contact to L-methionine.

This sequence belongs to the AdoMet synthase family. In terms of assembly, homotetramer; dimer of dimers. Mg(2+) serves as cofactor. Requires K(+) as cofactor.

It is found in the cytoplasm. The enzyme catalyses L-methionine + ATP + H2O = S-adenosyl-L-methionine + phosphate + diphosphate. It functions in the pathway amino-acid biosynthesis; S-adenosyl-L-methionine biosynthesis; S-adenosyl-L-methionine from L-methionine: step 1/1. Catalyzes the formation of S-adenosylmethionine (AdoMet) from methionine and ATP. The overall synthetic reaction is composed of two sequential steps, AdoMet formation and the subsequent tripolyphosphate hydrolysis which occurs prior to release of AdoMet from the enzyme. This chain is S-adenosylmethionine synthase, found in Syntrophobacter fumaroxidans (strain DSM 10017 / MPOB).